The chain runs to 447 residues: Multidrug efflux pump SdrM (447 aa).

The next 14 membrane-spanning stretches (helical) occupy residues 6–26 (IITV…SSII), 42–62 (LISL…PIVG), 70–90 (IIYV…MCGL), 94–114 (FTML…LMSL), 134–154 (IVGS…GGIL), 161–181 (WLFY…IWTF), 194–214 (FDTK…FALL), 217–237 (QLLL…MCLF), 260–280 (VFIT…YIPV), 286–306 (LGLS…AWIT), 323–342 (IYLL…SFGI), 346–363 (VLIA…GYIY), 392–412 (LGAS…SGIF), and 418–438 (NVLS…VVFF).

This sequence belongs to the major facilitator superfamily.

It localises to the cell membrane. Energy-dependent drug efflux pump that increases resistance to antimicrobial agents such as norfloxacin, acriflavine and ethidium bromide. In Staphylococcus aureus (strain N315), this protein is Multidrug efflux pump SdrM.